The chain runs to 202 residues: Protein-methionine-sulfoxide reductase heme-binding subunit MsrQ (202 aa).

Transmembrane regions (helical) follow at residues Ile8–Trp28, Leu82–Ile102, Pro116–Thr136, Leu149–Val169, and Ile171–Tyr191.

This sequence belongs to the MsrQ family. In terms of assembly, heterodimer of a catalytic subunit (MsrP) and a heme-binding subunit (MsrQ). FMN is required as a cofactor. It depends on heme b as a cofactor.

It is found in the cell inner membrane. Part of the MsrPQ system that repairs oxidized periplasmic proteins containing methionine sulfoxide residues (Met-O), using respiratory chain electrons. Thus protects these proteins from oxidative-stress damage caused by reactive species of oxygen and chlorine generated by the host defense mechanisms. MsrPQ is essential for the maintenance of envelope integrity under bleach stress, rescuing a wide series of structurally unrelated periplasmic proteins from methionine oxidation. MsrQ provides electrons for reduction to the reductase catalytic subunit MsrP, using the quinone pool of the respiratory chain. This is Protein-methionine-sulfoxide reductase heme-binding subunit MsrQ from Klebsiella pneumoniae subsp. pneumoniae (strain ATCC 700721 / MGH 78578).